The following is a 485-amino-acid chain: Aspartyl/glutamyl-tRNA(Asn/Gln) amidotransferase subunit B (485 aa).

Belongs to the GatB/GatE family. GatB subfamily. In terms of assembly, heterotrimer of A, B and C subunits.

It catalyses the reaction L-glutamyl-tRNA(Gln) + L-glutamine + ATP + H2O = L-glutaminyl-tRNA(Gln) + L-glutamate + ADP + phosphate + H(+). It carries out the reaction L-aspartyl-tRNA(Asn) + L-glutamine + ATP + H2O = L-asparaginyl-tRNA(Asn) + L-glutamate + ADP + phosphate + 2 H(+). Functionally, allows the formation of correctly charged Asn-tRNA(Asn) or Gln-tRNA(Gln) through the transamidation of misacylated Asp-tRNA(Asn) or Glu-tRNA(Gln) in organisms which lack either or both of asparaginyl-tRNA or glutaminyl-tRNA synthetases. The reaction takes place in the presence of glutamine and ATP through an activated phospho-Asp-tRNA(Asn) or phospho-Glu-tRNA(Gln). The protein is Aspartyl/glutamyl-tRNA(Asn/Gln) amidotransferase subunit B of Borrelia hermsii (strain HS1 / DAH).